A 318-amino-acid polypeptide reads, in one-letter code: Biotin synthase (318 aa).

A Radical SAM core domain is found at 44–270; sequence LCGDAVNLCS…INPTANIRLA (227 aa). Positions 62, 66, and 69 each coordinate [4Fe-4S] cluster. Residues serine 106, cysteine 138, cysteine 198, and arginine 268 each coordinate [2Fe-2S] cluster.

It belongs to the radical SAM superfamily. Biotin synthase family. In terms of assembly, homodimer. [4Fe-4S] cluster serves as cofactor. Requires [2Fe-2S] cluster as cofactor.

It catalyses the reaction (4R,5S)-dethiobiotin + (sulfur carrier)-SH + 2 reduced [2Fe-2S]-[ferredoxin] + 2 S-adenosyl-L-methionine = (sulfur carrier)-H + biotin + 2 5'-deoxyadenosine + 2 L-methionine + 2 oxidized [2Fe-2S]-[ferredoxin]. Its pathway is cofactor biosynthesis; biotin biosynthesis; biotin from 7,8-diaminononanoate: step 2/2. Its function is as follows. Catalyzes the conversion of dethiobiotin (DTB) to biotin by the insertion of a sulfur atom into dethiobiotin via a radical-based mechanism. The sequence is that of Biotin synthase from Alkaliphilus metalliredigens (strain QYMF).